The following is a 357-amino-acid chain: Spermatogenesis- and oogenesis-specific basic helix-loop-helix-containing protein 1 (357 aa).

A compositionally biased stretch (basic and acidic residues) spans 1–14 (MASGGHERANEDYR). The interval 1 to 40 (MASGGHERANEDYRVSGITGCSKTPQPETQDSLQTSSQSS) is disordered. Residues 19–31 (TGCSKTPQPETQD) are compositionally biased toward polar residues. One can recognise a bHLH domain in the interval 54–105 (PSLRRNVVSERERRRRISLSCEHLRALLPQFDGRREDMASVLEMSVYFLQLA). Residues 145-210 (KPDSGIAKPS…EPESSSLGPG (66 aa)) are disordered. Low complexity predominate over residues 200-209 (SEPESSSLGP).

Forms both hetero- and homodimers with SOHLH2. In males, it is mainly expressed in testis, while in females it is mainly expressed in ovary. In testis, it is exclusively expressed in spermatogonia, with a preference for prespermatogonia and type A spermatogonia. In ovary, it is detected in germ cell cysts, primordial follicles, and primary follicles but is undetectable by the secondary follicle stage (at protein level). Expressed in the majority of spermatogonia in adult animals, but not in the most undifferentiated spermatogonial population.

It localises to the cytoplasm. The protein resides in the nucleus. In terms of biological role, transcription regulator of both male and female germline differentiation. Suppresses genes involved in spermatogonial stem cells maintenance, and induces genes important for spermatogonial differentiation. Coordinates oocyte differentiation without affecting meiosis I. This chain is Spermatogenesis- and oogenesis-specific basic helix-loop-helix-containing protein 1 (Sohlh1), found in Mus musculus (Mouse).